A 636-amino-acid polypeptide reads, in one-letter code: MYNVRGDLNRKTPSDGNVNEIGSMYASRDTSTSSFTNPTDSSTRLLYNNASNATFSSAALAAGVGGTRASGYTHRFSIRPSSQTYNRYPNGGNSAGSDMYSTSPQNNSIVDDIENINKLEAVAFAGPTAGESDFSLSREDKEIDDFLHYPLPAKDAKKLSYFVGGEGLMQLLFLLFLAAGTGMLFIGLPILTYTGHNSLASTRVTGITNHQFRILRLLRYGSLIDPDTPESAYTFDSQDLGTLDLVFSDEFNYPGRAFYDGDDQFWLATDLHYAATTDYEYYDADTPTTANGTLRLRMDAFYNHDLNFRSGMVTTWNKLCFKGGRIEVSASLGGSPYIPGFWPGIWTIGNLVRPGYLATSDGVWPYSYNSCDAGITPNQSDPSGISYLGGQRLNQCVCKGEDHPNVGTGRGGPEIDALEGTFGSGIPYNGSIYLETMPVVSQSAQYAPFDLYMYPNYDFVTIYNQSVSAMNGWAGGVYQQALSCASQLNNSWLSGNAYQKYGFDYKPGSGPDALISWFVGDEYTWTMRQPAVGQNGNIASRPVSEEPMIVVLNFGISPTWIYFYWYELTFPQTMYVDYVRIYQDSSDSSSVLGCDPEGFPTTEYIANHPKAYLNYNATSWSEAGYVRPKNSLMDGC.

2 disordered regions span residues 1–22 and 81–107; these read MYNVRGDLNRKTPSDGNVNEIG and SSQTYNRYPNGGNSAGSDMYSTSPQNN. Over 1–170 the chain is Cytoplasmic; sequence MYNVRGDLNR…YFVGGEGLMQ (170 aa). A helical; Signal-anchor for type II membrane protein transmembrane segment spans residues 171–191; the sequence is LLFLLFLAAGTGMLFIGLPIL. The Lumenal portion of the chain corresponds to 192-636; it reads TYTGHNSLAS…RPKNSLMDGC (445 aa). The 370-residue stretch at 218–587 folds into the GH16 domain; sequence LRYGSLIDPD…YVRIYQDSSD (370 aa). N-linked (GlcNAc...) asparagine glycans are attached at residues asparagine 291, asparagine 378, asparagine 429, asparagine 464, asparagine 489, and asparagine 616.

Belongs to the SKN1/KRE6 family.

It localises to the endoplasmic reticulum membrane. Its function is as follows. Required for synthesis of the major beta-glucans of the yeast cell wall. This is an uncharacterized protein from Schizosaccharomyces pombe (strain 972 / ATCC 24843) (Fission yeast).